The sequence spans 202 residues: Imidazoleglycerol-phosphate dehydratase (202 aa).

The protein belongs to the imidazoleglycerol-phosphate dehydratase family.

The protein resides in the cytoplasm. It carries out the reaction D-erythro-1-(imidazol-4-yl)glycerol 3-phosphate = 3-(imidazol-4-yl)-2-oxopropyl phosphate + H2O. It participates in amino-acid biosynthesis; L-histidine biosynthesis; L-histidine from 5-phospho-alpha-D-ribose 1-diphosphate: step 6/9. The polypeptide is Imidazoleglycerol-phosphate dehydratase (Clavibacter michiganensis subsp. michiganensis (strain NCPPB 382)).